The following is a 309-amino-acid chain: Probable manganese-dependent inorganic pyrophosphatase (309 aa).

Positions 9, 13, 15, 75, 97, and 149 each coordinate Mn(2+).

The protein belongs to the PPase class C family. Mn(2+) serves as cofactor.

It is found in the cytoplasm. It carries out the reaction diphosphate + H2O = 2 phosphate + H(+). This chain is Probable manganese-dependent inorganic pyrophosphatase, found in Bacillus cereus (strain ATCC 10987 / NRS 248).